The following is a 381-amino-acid chain: MDLTDRRNPFNNLVFPPPPPPPSTTFTSPIFPRTSSSGTNFPILAIAVIGILATAFLLVSYYIFVIKCCLNWHQIDIFRRRRRSSDQNPLMIYSPHEVNRGLDESAIRAIPVFKFKKRDVVAGEEDQSKNSQECSVCLNEFQEDEKLRIIPNCCHVFHIDCIDIWLQGNANCPLCRTSVSCEASFTLDLISAPSSPRENSPHSRNRNLEPGLVLGGDDDFVVIELGASNGNNRESVRNIDFLTEQERVTSNEVSTGNSPKSVSPLPIKFGNRGMYKKERKFHKVTSMGDECIDTRGKDGHFGEIQPIRRSISMDSSVDRQLYLAVQEEISRRNRQIPVAGDGEDSSSSGGGNSRVMKRCFFSFGSSRTSKSSSILPVYLEP.

The interval 1–31 (MDLTDRRNPFNNLVFPPPPPPPSTTFTSPIF) is disordered. The chain crosses the membrane as a helical span at residues 46-66 (IAVIGILATAFLLVSYYIFVI). The segment at 134–176 (CSVCLNEFQEDEKLRIIPNCCHVFHIDCIDIWLQGNANCPLCR) adopts an RING-type; atypical zinc-finger fold. 2 disordered regions span residues 249-269 (TSNE…PIKF) and 334-354 (RQIP…GNSR). Residues 250-261 (SNEVSTGNSPKS) show a composition bias toward polar residues.

Belongs to the RING-type zinc finger family. ATL subfamily.

The protein localises to the membrane. The enzyme catalyses S-ubiquitinyl-[E2 ubiquitin-conjugating enzyme]-L-cysteine + [acceptor protein]-L-lysine = [E2 ubiquitin-conjugating enzyme]-L-cysteine + N(6)-ubiquitinyl-[acceptor protein]-L-lysine.. It functions in the pathway protein modification; protein ubiquitination. The sequence is that of RING-H2 finger protein ATL1 (ATL1) from Arabidopsis thaliana (Mouse-ear cress).